A 475-amino-acid polypeptide reads, in one-letter code: Erythroid membrane-associated protein (475 aa).

A signal peptide spans 1-29 (MEMASSAGSWLSGCLIPLVFLRLSVHVSG). In terms of domain architecture, Ig-like V-type spans 30-140 (HAGDAGKFHV…GNLSKEDTVI (111 aa)). Residues 30-155 (HAGDAGKFHV…PSVGSLSPSA (126 aa)) lie on the Extracellular side of the membrane. Cys-50 and Cys-126 form a disulfide bridge. The N-linked (GlcNAc...) asparagine glycan is linked to Asn-132. The chain crosses the membrane as a helical span at residues 156-176 (VALAVILPVLVLLIMVCLCLI). The Cytoplasmic segment spans residues 177–475 (WKQRRAKEKL…ALQELKAPSF (299 aa)). The B30.2/SPRY domain occupies 220 to 418 (KLKRAAANSG…LVICSELHKS (199 aa)). Ser-418 is subject to Phosphoserine.

It belongs to the immunoglobulin superfamily. BTN/MOG family. Post-translationally, glycosylated. In terms of tissue distribution, expressed in erythroid-enriched bone marrow (at protein level). Highly expressed in bone marrow and to a lower extent in leukocytes, thymus, lymph node and spleen.

Its subcellular location is the cell membrane. The protein localises to the cytoplasm. Functionally, possible role as a cell-adhesion or receptor molecule of erythroid cells. The sequence is that of Erythroid membrane-associated protein (ERMAP) from Homo sapiens (Human).